The primary structure comprises 447 residues: Phosphatidylinositol N-acetylglucosaminyltransferase subunit A (447 aa).

The Cytoplasmic segment spans residues 1-387 (MAEPPKLRVL…NRSLLERLMR (387 aa)). The chain crosses the membrane as a helical span at residues 388 to 408 (FLSCGAWAGKLFCMVMILDYL). Topologically, residues 409–447 (LWRLLQLLQPDEDIEEAPDICLCHHRGVEVSEGLRKKIK) are lumenal.

This sequence belongs to the glycosyltransferase group 1 family. Glycosyltransferase 4 subfamily. In terms of tissue distribution, expressed in roots, stems, leaves, flowers and pollen grains.

The protein localises to the endoplasmic reticulum membrane. The catalysed reaction is a 1,2-diacyl-sn-glycero-3-phospho-(1D-myo-inositol) + UDP-N-acetyl-alpha-D-glucosamine = a 6-(N-acetyl-alpha-D-glucosaminyl)-1-(1,2-diacyl-sn-glycero-3-phospho)-1D-myo-inositol + UDP + H(+). It participates in glycolipid biosynthesis; glycosylphosphatidylinositol-anchor biosynthesis. Necessary for the synthesis of N-acetylglucosaminyl-phosphatidylinositol, the very early intermediate in GPI-anchor biosynthesis. Required for pollen germination and pollen tube growth. This Arabidopsis thaliana (Mouse-ear cress) protein is Phosphatidylinositol N-acetylglucosaminyltransferase subunit A.